A 688-amino-acid polypeptide reads, in one-letter code: Complement C1s subcomponent (688 aa).

Positions 1-15 (MWCFVFFSLLASFSA) are cleaved as a signal peptide. The region spanning 16 to 130 (EPTMYGEILS…TGFAAYYSAV (115 aa)) is the CUB 1 domain. 6 residues coordinate Ca(2+): E60, D68, D113, D131, V132, and E134. The cysteines at positions 65 and 83 are disulfide-linked. The 42-residue stretch at 131–172 (DVNECTDFTDVPCSHFCNNFIGGYFCSCPPEYFLHDDMRTCG) folds into the EGF-like; calcium-binding domain. Intrachain disulfides connect C135-C147, C143-C156, and C158-C171. Ca(2+) is bound by residues N149, F150, and G153. N149 bears the (3R)-3-hydroxyasparagine mark. N174 is a glycosylation site (N-linked (GlcNAc...) asparagine). C175 and C202 form a disulfide bridge. Residues 175-290 (CSGDVFTALI…KGWKLRYHGD (116 aa)) enclose the CUB 2 domain. 5 residues coordinate Ca(2+): E226, D236, D275, G278, and Q279. A disulfide bond links C234 and C251. 2 consecutive Sushi domains span residues 292–356 (IPCP…ECQP) and 357–423 (VDCG…KCIP). 7 disulfides stabilise this stretch: C294/C341, C321/C354, C359/C403, C386/C421, C425/C549, C595/C618, and C627/C659. N406 carries N-linked (GlcNAc...) asparagine glycosylation. Positions 438–680 (IFGGYSTKIQ…YVDWILKTMQ (243 aa)) constitute a Peptidase S1 domain. Active-site charge relay system residues include H475 and D529. The active-site Charge relay system is the S631.

This sequence belongs to the peptidase S1 family. As to quaternary structure, core component of the complement C1 complex, a calcium-dependent complex composed of 1 molecule of the C1Q subcomplex, 2 molecules of C1R and 2 molecules of C1S. The C1Q subcomplex is composed 18 subunits: 3 chains of C1QA, C1QB, and C1QC trimerize to form 6 collagen-like triple helices connected to six globular ligand-recognition modules. In terms of processing, cleaved and activated by C1R to generate Complement C1s subcomponent heavy and light chains. The iron and 2-oxoglutarate dependent 3-hydroxylation of aspartate and asparagine is (R) stereospecific within EGF domains.

The protein localises to the secreted. Its subcellular location is the cell surface. It carries out the reaction Cleavage of Arg-|-Ala bond in complement component C4 to form C4a and C4b, and Lys(or Arg)-|-Lys bond in complement component C2 to form C2a and C2b: the 'classical' pathway C3 convertase.. Cleaved and activated by C1R. Immunoglobulin-binding promotes autoactivation of C1R, which results in the cleavage of the Arg-Ile bond in the catalytic domain. Inhibited by C1 inhibitor (SERPING1). Its function is as follows. Component of the complement C1 complex, a multiprotein complex that initiates the classical pathway of the complement system, a cascade of proteins that leads to phagocytosis and breakdown of pathogens and signaling that strengthens the adaptive immune system. C1S is activated following association of the C1 complex with immunoglobulins (IgG or IgM) complexed with antigens to form antigen-antibody complexes on the surface of pathogens. C1S is cleaved and activated by C1R to generate C1s subcomponent heavy and light chains. C1s subcomponent light chain then cleaves and activates C2 and C4, the next components of the classical complement pathway. Serine protease component of the complement C1 complex, which catalyzes cleavage and activation of C2 and C4, the next components of the classical complement pathway. Also cleaves IGFBP5 and thereby inhibits the trophic effects of IGF1. This chain is Complement C1s subcomponent, found in Rattus norvegicus (Rat).